The following is a 354-amino-acid chain: Guanine nucleotide-binding protein G(o) subunit alpha (354 aa).

Glycine 2 carries N-myristoyl glycine lipidation. A lipid anchor (S-palmitoyl cysteine) is attached at cysteine 3. The 323-residue stretch at 32–354 folds into the G-alpha domain; that stretch reads KDIKLLLLGA…ANNLRGCGLY (323 aa). A G1 motif region spans residues 35–48; the sequence is KLLLLGAGESGKST. GTP contacts are provided by residues 40-47, 176-182, 201-205, 270-273, and alanine 326; these read GAGESGKS, LRTRVKT, DVGGQ, and NKKD. Mg(2+) is bound by residues serine 47 and threonine 182. A G2 motif region spans residues 174–182; sequence DILRTRVKT. Residues 197–206 form a G3 motif region; it reads FKLFDVGGQR. A G4 motif region spans residues 266–273; sequence ILFLNKKD. The G5 motif stretch occupies residues 324 to 329; it reads TCATDT.

It belongs to the G-alpha family. G(i/o/t/z) subfamily. G proteins are composed of 3 units; alpha, beta and gamma. The alpha chain contains the guanine nucleotide binding site. Interacts (in GDP-bound form) with gpr-1; gpr-1 forms a complex with gpr-2 and lin-5. Interacts (in GDP-bound form) with gpb-1. Interacts (in GDP-bound form) with gbas-1 (via GBA motif); the interaction leads to activation of goa-1. As to expression, expressed in the ASER neuron and the intestine.

Its function is as follows. Guanine nucleotide-binding proteins (G proteins) are involved as modulators or transducers in various transmembrane signaling systems. In the 1-cell embryo, probably together with gpa-16, controls nuclear rotation and spindle elongation during mitosis. During the first embryonic cell divisions, plays a role in gpr-1/2 cortical localization and in the proper orientation of EMS blastomere mitotic spindle. Polarity determinants (par genes) may regulate lin-5/gpr-1/gpr-2/goa-1 locally to create the asymmetric forces that drive spindle movement. Involved in chemosensory responses to attractive and repellent odors detected by AWC and AWB sensory neurons, respectively. In ASER neurons, acts downstream of glr-3 to regulate cold avoidance behavior via calcium signaling, and it may also play a role in sensing cold in the intestine. Negatively regulates axon regeneration after injury downstream of the inhibitory compound arachidonoyl ethanolamide (AEA) by antagonizing the activation of the JNK pathway (mlk-1/mek-1/kgb-1). In neurons, may negatively regulate diacylglycerol (DAG) production mediated by egl-30 signaling cascade and thereby negatively regulates acetylcholine release. Couples to the muscarinic acetylcholine receptor gar-2 to negatively regulate cholinergic receptor activity in the presence of high levels of acetylcholine in ventral cord motor neurons. Plays a role in the navigational capacity of sperm and the targeting of sperm derived from males to the fertilization site in the uterus of hermaphrodites. Involved in egg-laying and in regulating dopamine-mediated locomotion. Most likely couples to the dopamine receptors dop-2 and dop-3 to positively regulate the dopamine-mediated suppression of crh-1/CREB1 transcription factor activation in cholinergic SIA neurons in the presence of food. This Caenorhabditis elegans protein is Guanine nucleotide-binding protein G(o) subunit alpha.